A 941-amino-acid chain; its full sequence is Zinc finger protein 507 (941 aa).

Position 95 is a phosphoserine (serine 95). C2H2-type zinc fingers lie at residues 122–144 and 152–175; these read YQCSLCKFLSPSFSVLKEHVKQH and LMCSECHATSRSQQELEAHVVSEH. The span at 165–177 shows a compositional bias: basic and acidic residues; it reads QELEAHVVSEHEN. The disordered stretch occupies residues 165 to 198; that stretch reads QELEAHVVSEHENSASSQARSSPSGQGATERKSE. The segment covering 178–192 has biased composition (low complexity); that stretch reads SASSQARSSPSGQGA. The C2H2-type 3 zinc finger occupies 237–259; it reads YRCLFCSYTCGQQRMLKTHAWKH. Serine 415 carries the post-translational modification Phosphoserine. The tract at residues 455 to 477 is disordered; sequence ELSKGLAPDENAPPGRRRTNSES. 5 C2H2-type zinc fingers span residues 630–652, 658–680, 686–709, 746–768, and 774–796; these read YRCRLCNYSSGNRGYIKQHLRVH, YQCPICEHIAENSKDLESHMINH, HQCKQCKESFHYKSQLRNHEREQH, YRCDVCDYTSTTYVGVRNHRRVH, and YRCSLCGYVCSHPPSLKSHMWKH. Residues 823–856 are disordered; that stretch reads GKSRGKPLLTSSEERTGPTTGSPENLVSSSELTS. Polar residues predominate over residues 839–856; it reads GPTTGSPENLVSSSELTS. Residues 899–921 form a C2H2-type 9 zinc finger; the sequence is FCCCICGFESTSKESLLDHMKEH.

This sequence belongs to the krueppel C2H2-type zinc-finger protein family.

It localises to the nucleus. In terms of biological role, may be involved in transcriptional regulation. This chain is Zinc finger protein 507 (Znf507), found in Mus musculus (Mouse).